A 315-amino-acid polypeptide reads, in one-letter code: Probable integrase/recombinase aq_aa09 (315 aa).

The Core-binding (CB) domain maps to 1–78; sequence MEHFIDTYLY…EVRLFYEWLQ (78 aa). The region spanning 106–313 is the Tyr recombinase domain; the sequence is SKKKYYSDDE…REKQLEAILE (208 aa). Active-site residues include R150, K186, H263, R266, and H289. Y299 acts as the O-(3'-phospho-DNA)-tyrosine intermediate in catalysis.

This sequence belongs to the 'phage' integrase family.

Functionally, may function as an integrase. The protein is Probable integrase/recombinase aq_aa09 of Aquifex aeolicus (strain VF5).